Reading from the N-terminus, the 589-residue chain is PTS system mannitol-specific EIICB component (589 aa).

Residues 1 to 25 (MEEKVSLKVRVQKLGTSLSNMVMPN) are Cytoplasmic-facing. Positions 14-347 (LGTSLSNMVM…LHADKSTEDS (334 aa)) constitute a PTS EIIC type-2 domain. A helical membrane pass occupies residues 26–47 (IGAFIAWGVLTALFIADGYLPN). Topologically, residues 48 to 51 (EQLA) are extracellular. Residues 52 to 72 (TVVGPMLTYLLPILIGYTGGY) form a helical membrane-spanning segment. Topologically, residues 73–135 (MIHGQRGAVV…PGFEMLVNNF (63 aa)) are cytoplasmic. Residues 136-157 (SAGLVGFALLLLAFYAIGPVVS) form a helical membrane-spanning segment. The Extracellular segment spans residues 158 to 166 (TLTGAVGNG). A helical membrane pass occupies residues 167-187 (VEAIVNARLLPMANIIIEPAK). The Cytoplasmic segment spans residues 188–274 (VLFLNNALNH…VMMKPTLFLA (87 aa)). Residues 275–294 (AMAGGISGTFTFQLLDAGLK) traverse the membrane as a helical segment. Residues 295–316 (SPASPGSIIAIMATAPKGVWPH) are Extracellular-facing. Residues 317–338 (LNILLGVLVAAVVSFLIAALIL) traverse the membrane as a helical segment. Residues 339–589 (HADKSTEDSL…YDKMAARMYK (251 aa)) are Cytoplasmic-facing. The 96-residue stretch at 381–476 (EKIIFACDAG…SLTGASPIAE (96 aa)) folds into the PTS EIIB type-2 domain. C387 acts as the Phosphocysteine intermediate; for EIIB activity in catalysis. C387 is subject to Phosphocysteine; by EIIA.

Homodimer.

The protein resides in the cell membrane. It carries out the reaction D-mannitol(out) + N(pros)-phospho-L-histidyl-[protein] = D-mannitol 1-phosphate(in) + L-histidyl-[protein]. Functionally, the phosphoenolpyruvate-dependent sugar phosphotransferase system (sugar PTS), a major carbohydrate active transport system, catalyzes the phosphorylation of incoming sugar substrates concomitantly with their translocation across the cell membrane. The enzyme II CmtAB PTS system is involved in D-mannitol transport. This Streptococcus pneumoniae (strain ATCC BAA-255 / R6) protein is PTS system mannitol-specific EIICB component (mtlA).